The chain runs to 279 residues: Urease accessory protein UreD (279 aa).

Belongs to the UreD family. UreD, UreF and UreG form a complex that acts as a GTP-hydrolysis-dependent molecular chaperone, activating the urease apoprotein by helping to assemble the nickel containing metallocenter of UreC. The UreE protein probably delivers the nickel.

It is found in the cytoplasm. Required for maturation of urease via the functional incorporation of the urease nickel metallocenter. This chain is Urease accessory protein UreD, found in Trichodesmium erythraeum (strain IMS101).